The primary structure comprises 632 residues: Chaperone protein HtpG (632 aa).

The tract at residues 1–339 is a; substrate-binding; it reads MTQQTMSFQA…SSDLPLNVSR (339 aa). The interval 340–559 is b; it reads EILQESRDVK…DNDMSGYLQR (220 aa). Positions 560–632 are c; that stretch reads MLKAAGQSAP…TNALLLSRAA (73 aa).

The protein belongs to the heat shock protein 90 family. As to quaternary structure, homodimer.

The protein resides in the cytoplasm. Functionally, molecular chaperone. Has ATPase activity. The chain is Chaperone protein HtpG from Burkholderia pseudomallei (strain 1106a).